The following is an 874-amino-acid chain: MKVSDIRSKFLQFFESKGHTVVRSSSLVPANDPTLLFTNSGMVQFKDVFLGTDKRPYVRATSSQRSVRAGGKHNDLENVGYTARHHTFFEMLGNFSFGDYFKREAIQYAWELLTKVYQLPADKLWVTVYAEDDEAYDIWAKEVGVPADRIVRIGDNKGARYASDNFWQMADTGPCGPCSEIFYDHGPDVWGGPPGSPEEDGDRYIEIWNLVFMQFNRDEQGTMTPLPKPCVDTGMGLERIAAVLQHVHSNYEIDLFQALIKGAGRETHIADLNQNSLKVIADHIRACSFLIVDGVIPGNEGRGYVLRRIVRRAIRHGYKLGQKTPFFHKLVGDLVAQMGEAYPELAEAQSRVVEVLKAEEERFFETIENGMSILDAAVADLKAKGGKVLDGELAFKLHDTFGFPLDLTQDVAREQEITVDEAAFDAAMTRQREQARAAGKFKMAAGLEYSGEKTVFHGYDALSMDGVRVTALYVDGASVDTMQPGQSGVVVLDNTPFYAESGGQVGDQGTLVSGPAVFAVADTTKIQSDVFGHQGTLANGALKVGDTVAAQVDAVRRARTVRNHSATHLMHKALREVLGTHVQQKGSLVDPDKTRFDFSHNAPLTDAQIRQIEEIVNAEILSNAPTVAQVMPFDDAVKSGAMALFGEKYADDVRVLSIGTSKELCGGTHVTRTGDIGLFKIVVEAGVAAGIRRVEAITGDNALHYLQSLDARLNEAAAALRAQPSELVPRIGQVQDQVRALEKELEKLKSKLASSQGDELAAQAVDVKGLKVLAAQLDGADVKTLRETMDKLKDKLQSAAIVLAAVADGKVSLIAGVTADATSKVKAGELVNFVAQQVGGKGGGRPDMAQAGGTDPANLPKALAGVTEWVSAKV.

Zn(2+)-binding residues include H564, H568, C665, and H669.

The protein belongs to the class-II aminoacyl-tRNA synthetase family. Zn(2+) is required as a cofactor.

It is found in the cytoplasm. It carries out the reaction tRNA(Ala) + L-alanine + ATP = L-alanyl-tRNA(Ala) + AMP + diphosphate. In terms of biological role, catalyzes the attachment of alanine to tRNA(Ala) in a two-step reaction: alanine is first activated by ATP to form Ala-AMP and then transferred to the acceptor end of tRNA(Ala). Also edits incorrectly charged Ser-tRNA(Ala) and Gly-tRNA(Ala) via its editing domain. The polypeptide is Alanine--tRNA ligase (Cupriavidus metallidurans (strain ATCC 43123 / DSM 2839 / NBRC 102507 / CH34) (Ralstonia metallidurans)).